Consider the following 360-residue polypeptide: D-xylose 1-dehydrogenase [NADP(+)] (360 aa).

It belongs to the Gfo/Idh/MocA family. Homotretramer.

The enzyme catalyses D-xylofuranose + NADP(+) = D-xylono-1,4-lactone + NADPH + H(+). Functionally, NADP-dependent D-xylose dehydrogenase involved in the degradation of D-xylose, a major component of hemicelluloses such as xylan. In addition to D-xylose, oxidizes D-ribose at similar kinetic constants, whereas D-glucose is oxidized with about 70-fold lower catalytic efficiency. The polypeptide is D-xylose 1-dehydrogenase [NADP(+)] (gfo6) (Haloarcula marismortui (strain ATCC 43049 / DSM 3752 / JCM 8966 / VKM B-1809) (Halobacterium marismortui)).